The chain runs to 769 residues: DNA gyrase subunit B (769 aa).

The region spanning 414–528 (SEIYLVEGDS…NGHIYLAQPP (115 aa)) is the Toprim domain. Mg(2+) contacts are provided by Glu420, Asp493, and Asp495.

Belongs to the type II topoisomerase GyrB family. Heterotetramer, composed of two GyrA and two GyrB chains. In the heterotetramer, GyrA contains the active site tyrosine that forms a transient covalent intermediate with DNA, while GyrB binds cofactors and catalyzes ATP hydrolysis. Requires Mg(2+) as cofactor. Mn(2+) is required as a cofactor. It depends on Ca(2+) as a cofactor.

Its subcellular location is the cytoplasm. The catalysed reaction is ATP-dependent breakage, passage and rejoining of double-stranded DNA.. A type II topoisomerase that negatively supercoils closed circular double-stranded (ds) DNA in an ATP-dependent manner to modulate DNA topology and maintain chromosomes in an underwound state. Negative supercoiling favors strand separation, and DNA replication, transcription, recombination and repair, all of which involve strand separation. Also able to catalyze the interconversion of other topological isomers of dsDNA rings, including catenanes and knotted rings. Type II topoisomerases break and join 2 DNA strands simultaneously in an ATP-dependent manner. The polypeptide is DNA gyrase subunit B (Campylobacter jejuni subsp. jejuni serotype O:2 (strain ATCC 700819 / NCTC 11168)).